A 1486-amino-acid polypeptide reads, in one-letter code: Phosphatidylinositol 3-kinase C2 domain-containing subunit gamma (1486 aa).

In terms of domain architecture, PI3K-RBD spans 285–371 (KTKFNIHIFI…IQLHLQKSRE (87 aa)). The C2 PI3K-type domain maps to 521 to 669 (LPSHLSFTVY…SPVTLQIDFP (149 aa)). Residues 684–860 (RSNLEEPLKE…QKLLAALQFC (177 aa)) enclose the PIK helical domain. In terms of domain architecture, PI3K/PI4K catalytic spans 929–1207 (DHDACSYFTS…KIKESLECFP (279 aa)). A G-loop region spans residues 935–941 (YFTSNAL). Residues 1071–1079 (GVCDRHNDN) are catalytic loop. The segment at 1090-1116 (HIDFGKFLGHAQTFGGIKRDRAPFIFT) is activation loop. A PX domain is found at 1240-1352 (LSTTRSIERA…SFFLSEAVQQ (113 aa)). Residues 1369 to 1486 (KKPKVQLVIS…KWYPLGNSII (118 aa)) enclose the C2 domain.

The protein belongs to the PI3/PI4-kinase family. In terms of tissue distribution, highly expressed in liver, prostate and testis. Lower levels in small intestine, kidney and pancreas.

The protein resides in the membrane. It carries out the reaction a 1,2-diacyl-sn-glycero-3-phospho-(1D-myo-inositol 4-phosphate) + ATP = a 1,2-diacyl-sn-glycero-3-phospho-(1D-myo-inositol-3,4-bisphosphate) + ADP + H(+). The enzyme catalyses a 1,2-diacyl-sn-glycero-3-phospho-(1D-myo-inositol) + ATP = a 1,2-diacyl-sn-glycero-3-phospho-(1D-myo-inositol-3-phosphate) + ADP + H(+). Generates phosphatidylinositol 3-phosphate (PtdIns3P) and phosphatidylinositol 3,4-bisphosphate (PtdIns(3,4)P2) that act as second messengers. May play a role in SDF1A-stimulated chemotaxis. This chain is Phosphatidylinositol 3-kinase C2 domain-containing subunit gamma (PIK3C2G), found in Homo sapiens (Human).